The primary structure comprises 151 residues: Small ribosomal subunit protein uS15 (151 aa).

This sequence belongs to the universal ribosomal protein uS15 family.

This Zea mays (Maize) protein is Small ribosomal subunit protein uS15 (RPS13).